We begin with the raw amino-acid sequence, 436 residues long: GTPase Der (436 aa).

EngA-type G domains lie at 4-167 (PTVA…PNEI) and 175-351 (IKFS…HAQN). Residues 10 to 17 (GRPNVGKS), 57 to 61 (DTGGI), 119 to 122 (NKVD), 181 to 188 (GRPNVGKS), 229 to 233 (DTAGM), and 294 to 297 (NKWD) each bind GTP. One can recognise a KH-like domain in the interval 352-436 (LRISSSVLND…PIHLIARKRK (85 aa)).

Belongs to the TRAFAC class TrmE-Era-EngA-EngB-Septin-like GTPase superfamily. EngA (Der) GTPase family. Associates with the 50S ribosomal subunit.

In terms of biological role, GTPase that plays an essential role in the late steps of ribosome biogenesis. The sequence is that of GTPase Der from Lactococcus lactis subsp. cremoris (strain SK11).